A 401-amino-acid chain; its full sequence is SVP1-like protein 2 (401 aa).

WD repeat units lie at residues 222-262 and 267-306; these read AHKN…LIHE and LDRA…DKRH.

Belongs to the WD repeat PROPPIN family.

It is found in the vacuole membrane. It localises to the cytoplasmic vesicle membrane. Its function is as follows. Involved in mitochondrial or peroxisomal functions and amino acid signaling pathways. This chain is SVP1-like protein 2 (HSV2), found in Eremothecium gossypii (strain ATCC 10895 / CBS 109.51 / FGSC 9923 / NRRL Y-1056) (Yeast).